Reading from the N-terminus, the 520-residue chain is Flavin-dependent halogenase radH (520 aa).

The FAD site is built by glycine 14, alanine 17, and glutamate 47. Chloride contacts are provided by serine 330 and glycine 331.

Belongs to the flavin-dependent halogenase family.

It functions in the pathway secondary metabolite biosynthesis. Non-heme halogenase; part of the gene cluster that mediates the biosynthesis of radicicol, a resorcylic acid lactone (RAL) that irreversibly inhibits the HSP90 molecular chaperone, an important target for cancer chemotherapy. The cluster encodes only two apparent post-PKS enzymes, a cytochrome P450 monooxygenase (radP) and a non-heme halogenase (radH) that introduce the epoxide and the chlorine, respectively. If this cluster includes all the genes required for radicicol biosynthesis, the remaining structural features of radicicol are presumably generated by the PKSs rads1 and rads2. The C-2' ketone could arise if the R-PKS rads1 and NR-PKS rads2 each carry out four iterations, in contrast to the five iteration-three iteration split for the hypothemycin PKSs. The origin of the cis 5',6' double bond is not known. The radicicol R-PKS rads1 ER domain may catalyze either double bond isomerization or reduction in the third iteration. The chain is Flavin-dependent halogenase radH from Floropilus chiversii (Chaetomium chiversii).